Here is a 248-residue protein sequence, read N- to C-terminus: 2,3-bisphosphoglycerate-dependent phosphoglycerate mutase (248 aa).

Substrate contacts are provided by residues 8-15, 21-22, R60, 87-90, K98, 114-115, and 183-184; these read RHGESEWN, TG, ERHY, RR, and GN. The active-site Tele-phosphohistidine intermediate is the H9. E87 acts as the Proton donor/acceptor in catalysis.

It belongs to the phosphoglycerate mutase family. BPG-dependent PGAM subfamily.

The catalysed reaction is (2R)-2-phosphoglycerate = (2R)-3-phosphoglycerate. Its pathway is carbohydrate degradation; glycolysis; pyruvate from D-glyceraldehyde 3-phosphate: step 3/5. In terms of biological role, catalyzes the interconversion of 2-phosphoglycerate and 3-phosphoglycerate. This is 2,3-bisphosphoglycerate-dependent phosphoglycerate mutase from Borreliella burgdorferi (strain ATCC 35210 / DSM 4680 / CIP 102532 / B31) (Borrelia burgdorferi).